We begin with the raw amino-acid sequence, 514 residues long: Probable cytochrome P450 6w1 (514 aa).

Position 450 (Cys450) interacts with heme.

It belongs to the cytochrome P450 family. Heme serves as cofactor.

It localises to the endoplasmic reticulum membrane. It is found in the microsome membrane. May be involved in the metabolism of insect hormones and in the breakdown of synthetic insecticides. The sequence is that of Probable cytochrome P450 6w1 (Cyp6w1) from Drosophila melanogaster (Fruit fly).